Reading from the N-terminus, the 37-residue chain is Lambda-hexatoxin-Hf1a (37 aa).

4 cysteine pairs are disulfide-bonded: Cys4–Cys18, Cys11–Cys23, Cys14–Cys15, and Cys17–Cys34.

It belongs to the neurotoxin 11 (kappa toxin) family. As to expression, expressed by the venom gland.

Its subcellular location is the secreted. In terms of biological role, this excitatory toxin inhibits insect calcium-activated potassium (KCa) channels (Slo-type). In Hadronyche formidabilis (Northern tree funnel-web spider), this protein is Lambda-hexatoxin-Hf1a.